The chain runs to 321 residues: Translation initiation factor eIF2B subunit alpha (321 aa).

The protein belongs to the eIF-2B alpha/beta/delta subunits family. Component of the translation initiation factor 2B (eIF2B) complex which is a heterodecamer of two sets of five different subunits: alpha, beta, gamma, delta and epsilon. Subunits alpha, beta and delta comprise a regulatory subcomplex and subunits epsilon and gamma comprise a catalytic subcomplex. Within the complex, the hexameric regulatory complex resides at the center, with the two heterodimeric catalytic subcomplexes bound on opposite sides.

It localises to the cytoplasm. The protein localises to the cytosol. In terms of biological role, acts as a component of the translation initiation factor 2B (eIF2B) complex, which catalyzes the exchange of GDP for GTP on eukaryotic initiation factor 2 (eIF2) gamma subunit. Its guanine nucleotide exchange factor activity is repressed when bound to eIF2 complex phosphorylated on the alpha subunit, thereby limiting the amount of methionyl-initiator methionine tRNA available to the ribosome and consequently global translation is repressed. This is Translation initiation factor eIF2B subunit alpha (eif2b1) from Dictyostelium discoideum (Social amoeba).